Reading from the N-terminus, the 962-residue chain is Protein kinase ORF73 (962 aa).

Disordered stretches follow at residues 1 to 28 (MADR…NDRP) and 62 to 152 (STPA…RATT). Residues 81 to 90 (DSDDDDEEDN) are compositionally biased toward acidic residues. Over residues 143–152 (YDTTGRRATT) the composition is skewed to polar residues. Residues 301 to 595 (LRAAPVLGKG…ASDLLKSPRY (295 aa)) form the Protein kinase domain. Residues 307–315 (LGKGYFGTV) and lysine 324 each bind ATP. Aspartate 434 functions as the Proton acceptor in the catalytic mechanism.

Belongs to the protein kinase superfamily. Ser/Thr protein kinase family.

It carries out the reaction L-seryl-[protein] + ATP = O-phospho-L-seryl-[protein] + ADP + H(+). The catalysed reaction is L-threonyl-[protein] + ATP = O-phospho-L-threonyl-[protein] + ADP + H(+). This is Protein kinase ORF73 (ORF73) from Ictaluridae (bullhead catfishes).